A 124-amino-acid chain; its full sequence is Small ribosomal subunit protein bS6 (124 aa).

The disordered stretch occupies residues 96 to 124 (ETAPSPMMKEVQREEARKAAQTTTEGQPA). Residues 115-124 (AQTTTEGQPA) show a composition bias toward polar residues.

The protein belongs to the bacterial ribosomal protein bS6 family.

Functionally, binds together with bS18 to 16S ribosomal RNA. The protein is Small ribosomal subunit protein bS6 of Cupriavidus metallidurans (strain ATCC 43123 / DSM 2839 / NBRC 102507 / CH34) (Ralstonia metallidurans).